We begin with the raw amino-acid sequence, 294 residues long: NAD kinase (294 aa).

The active-site Proton acceptor is Asp-74. NAD(+) is bound by residues 74–75, 148–149, Arg-159, Arg-176, Asp-178, 189–194, and Gln-247; these read DG, ND, and TAYALS.

Belongs to the NAD kinase family. Requires a divalent metal cation as cofactor.

The protein localises to the cytoplasm. The catalysed reaction is NAD(+) + ATP = ADP + NADP(+) + H(+). In terms of biological role, involved in the regulation of the intracellular balance of NAD and NADP, and is a key enzyme in the biosynthesis of NADP. Catalyzes specifically the phosphorylation on 2'-hydroxyl of the adenosine moiety of NAD to yield NADP. The chain is NAD kinase from Azoarcus sp. (strain BH72).